Here is a 452-residue protein sequence, read N- to C-terminus: Bifunctional protein GlmU (452 aa).

Residues 1 to 232 (MTARNSLTIV…EDEVRGINTK (232 aa)) form a pyrophosphorylase region. Residues 11–14 (LAAG), K25, Q78, and 83–84 (GT) contribute to the UDP-N-acetyl-alpha-D-glucosamine site. D108 serves as a coordination point for Mg(2+). Residues G144, E158, N173, and N230 each contribute to the UDP-N-acetyl-alpha-D-glucosamine site. N230 provides a ligand contact to Mg(2+). The segment at 233 to 253 (AQLAEAETVMQTRLRLAAMAA) is linker. An N-acetyltransferase region spans residues 254–452 (GVTLIAPETV…KSRHRKPKAH (199 aa)). UDP-N-acetyl-alpha-D-glucosamine is bound by residues R319 and K337. Catalysis depends on H349, which acts as the Proton acceptor. UDP-N-acetyl-alpha-D-glucosamine is bound by residues Y352 and N363. Acetyl-CoA is bound by residues A366, 372-373 (NY), S391, S409, and R426.

In the N-terminal section; belongs to the N-acetylglucosamine-1-phosphate uridyltransferase family. The protein in the C-terminal section; belongs to the transferase hexapeptide repeat family. In terms of assembly, homotrimer. It depends on Mg(2+) as a cofactor.

Its subcellular location is the cytoplasm. The catalysed reaction is alpha-D-glucosamine 1-phosphate + acetyl-CoA = N-acetyl-alpha-D-glucosamine 1-phosphate + CoA + H(+). The enzyme catalyses N-acetyl-alpha-D-glucosamine 1-phosphate + UTP + H(+) = UDP-N-acetyl-alpha-D-glucosamine + diphosphate. Its pathway is nucleotide-sugar biosynthesis; UDP-N-acetyl-alpha-D-glucosamine biosynthesis; N-acetyl-alpha-D-glucosamine 1-phosphate from alpha-D-glucosamine 6-phosphate (route II): step 2/2. It participates in nucleotide-sugar biosynthesis; UDP-N-acetyl-alpha-D-glucosamine biosynthesis; UDP-N-acetyl-alpha-D-glucosamine from N-acetyl-alpha-D-glucosamine 1-phosphate: step 1/1. It functions in the pathway bacterial outer membrane biogenesis; LPS lipid A biosynthesis. Functionally, catalyzes the last two sequential reactions in the de novo biosynthetic pathway for UDP-N-acetylglucosamine (UDP-GlcNAc). The C-terminal domain catalyzes the transfer of acetyl group from acetyl coenzyme A to glucosamine-1-phosphate (GlcN-1-P) to produce N-acetylglucosamine-1-phosphate (GlcNAc-1-P), which is converted into UDP-GlcNAc by the transfer of uridine 5-monophosphate (from uridine 5-triphosphate), a reaction catalyzed by the N-terminal domain. This Rhodopseudomonas palustris (strain TIE-1) protein is Bifunctional protein GlmU.